Consider the following 941-residue polypeptide: Isoleucine--tRNA ligase (941 aa).

A 'HIGH' region motif is present at residues 58–68 (PYANGNIHIGH). Glu564 contributes to the L-isoleucyl-5'-AMP binding site. Residues 605–609 (KMSKS) carry the 'KMSKS' region motif. Residue Lys608 coordinates ATP. The Zn(2+) site is built by Cys904, Cys907, Cys924, and Cys927.

Belongs to the class-I aminoacyl-tRNA synthetase family. IleS type 1 subfamily. In terms of assembly, monomer. Zn(2+) is required as a cofactor.

It localises to the cytoplasm. It carries out the reaction tRNA(Ile) + L-isoleucine + ATP = L-isoleucyl-tRNA(Ile) + AMP + diphosphate. Its function is as follows. Catalyzes the attachment of isoleucine to tRNA(Ile). As IleRS can inadvertently accommodate and process structurally similar amino acids such as valine, to avoid such errors it has two additional distinct tRNA(Ile)-dependent editing activities. One activity is designated as 'pretransfer' editing and involves the hydrolysis of activated Val-AMP. The other activity is designated 'posttransfer' editing and involves deacylation of mischarged Val-tRNA(Ile). The chain is Isoleucine--tRNA ligase from Buchnera aphidicola subsp. Cinara cedri (strain Cc).